Here is a 194-residue protein sequence, read N- to C-terminus: MGAKLVAATHNPGKVPEIAALLDGRFEIVTAGQLGLPEPDETESTFVGNALLKARHAADLSGLPALADDSGLSVTALDGAPGIFSARWAGPGKDFALAMKKVEERLEETASDDRTAWFTSALAVAWPNGPAVVVEGRVDGTLVFPGRGTRGFGYDPIFVPEGHALTFGEMEPAAKDAMSHRARAFAKLKAALFD.

9–14 contacts substrate; it reads THNPGK. The Mg(2+) site is built by Asp40 and Asp69. The Proton acceptor role is filled by Asp69. Substrate-binding positions include Ser70, 152 to 155, Lys175, and 180 to 181; these read FGYD and HR.

This sequence belongs to the HAM1 NTPase family. Homodimer. It depends on Mg(2+) as a cofactor.

The enzyme catalyses XTP + H2O = XMP + diphosphate + H(+). It catalyses the reaction dITP + H2O = dIMP + diphosphate + H(+). The catalysed reaction is ITP + H2O = IMP + diphosphate + H(+). Pyrophosphatase that catalyzes the hydrolysis of nucleoside triphosphates to their monophosphate derivatives, with a high preference for the non-canonical purine nucleotides XTP (xanthosine triphosphate), dITP (deoxyinosine triphosphate) and ITP. Seems to function as a house-cleaning enzyme that removes non-canonical purine nucleotides from the nucleotide pool, thus preventing their incorporation into DNA/RNA and avoiding chromosomal lesions. In Caulobacter vibrioides (strain ATCC 19089 / CIP 103742 / CB 15) (Caulobacter crescentus), this protein is dITP/XTP pyrophosphatase.